Here is a 209-residue protein sequence, read N- to C-terminus: Large ribosomal subunit protein uL3 (209 aa).

The interval 130–162 is disordered; it reads RGPMTHGSKFKRAPGSMGASSDPSRTFKNKRMP.

It belongs to the universal ribosomal protein uL3 family. In terms of assembly, part of the 50S ribosomal subunit. Forms a cluster with proteins L14 and L19.

Functionally, one of the primary rRNA binding proteins, it binds directly near the 3'-end of the 23S rRNA, where it nucleates assembly of the 50S subunit. The protein is Large ribosomal subunit protein uL3 of Clostridium botulinum (strain Alaska E43 / Type E3).